The primary structure comprises 63 residues: Sec-independent protein translocase protein TatA (63 aa).

Residues 1-21 traverse the membrane as a helical segment; sequence MGGLSVGSVVLIALVALLIFG.

Belongs to the TatA/E family. As to quaternary structure, forms a complex with TatC.

It is found in the cell membrane. Part of the twin-arginine translocation (Tat) system that transports large folded proteins containing a characteristic twin-arginine motif in their signal peptide across membranes. TatA could form the protein-conducting channel of the Tat system. This is Sec-independent protein translocase protein TatA from Shouchella clausii (strain KSM-K16) (Alkalihalobacillus clausii).